We begin with the raw amino-acid sequence, 304 residues long: Tyrosine recombinase XerD (304 aa).

The 86-residue stretch at 6–91 (EPWRKTLETF…AIRSFHKFLL (86 aa)) folds into the Core-binding (CB) domain. One can recognise a Tyr recombinase domain in the interval 112–298 (YLPSVLTIEE…DRSFIKEVHK (187 aa)). Catalysis depends on residues R155, K179, H250, R253, and H276. Residue Y285 is the O-(3'-phospho-DNA)-tyrosine intermediate of the active site.

It belongs to the 'phage' integrase family. XerD subfamily. Forms a cyclic heterotetrameric complex composed of two molecules of XerC and two molecules of XerD.

The protein localises to the cytoplasm. Site-specific tyrosine recombinase, which acts by catalyzing the cutting and rejoining of the recombining DNA molecules. The XerC-XerD complex is essential to convert dimers of the bacterial chromosome into monomers to permit their segregation at cell division. It also contributes to the segregational stability of plasmids. The protein is Tyrosine recombinase XerD of Chlorobaculum tepidum (strain ATCC 49652 / DSM 12025 / NBRC 103806 / TLS) (Chlorobium tepidum).